Consider the following 306-residue polypeptide: ATP synthase F(1) complex subunit gamma, mitochondrial (306 aa).

The N-terminal 17 residues, 1–17 (MNSASKLFVVLASPANQ), are a transit peptide targeting the mitochondrion.

The protein belongs to the ATPase gamma chain family. Component of the ATP synthase complex composed at least of ATP5F1A/subunit alpha, ATP5F1B/subunit beta, ATP5MC1/subunit c (homooctomer), MT-ATP6/subunit a, MT-ATP8/subunit 8, ATP5ME/subunit e, ATP5MF/subunit f, ATP5MG/subunit g, ATP5MK/subunit k, ATP5MJ/subunit j, ATP5F1C/subunit gamma, ATP5F1D/subunit delta, ATP5F1E/subunit epsilon, ATP5PF/subunit F6, ATP5PB/subunit b, ATP5PD/subunit d, ATP5PO/subunit OSCP. ATP synthase complex consists of a soluble F(1) head domain (subunits alpha(3) and beta(3)) - the catalytic core - and a membrane F(0) domain - the membrane proton channel (subunits c, a, 8, e, f, g, k and j). These two domains are linked by a central stalk (subunits gamma, delta, and epsilon) rotating inside the F1 region and a stationary peripheral stalk (subunits F6, b, d, and OSCP).

It localises to the mitochondrion inner membrane. Its function is as follows. Subunit gamma, of the mitochondrial membrane ATP synthase complex (F(1)F(0) ATP synthase or Complex V) that produces ATP from ADP in the presence of a proton gradient across the membrane which is generated by electron transport complexes of the respiratory chain. ATP synthase complex consist of a soluble F(1) head domain - the catalytic core - and a membrane F(1) domain - the membrane proton channel. These two domains are linked by a central stalk rotating inside the F(1) region and a stationary peripheral stalk. During catalysis, ATP synthesis in the catalytic domain of F(1) is coupled via a rotary mechanism of the central stalk subunits to proton translocation. In vivo, can only synthesize ATP although its ATP hydrolase activity can be activated artificially in vitro. With the central stalk subunit delta, is essential for the biogenesis of F(1) catalytic part of the ATP synthase complex namely in the formation of F1 assembly intermediate. The sequence is that of ATP synthase F(1) complex subunit gamma, mitochondrial from Dictyostelium discoideum (Social amoeba).